The sequence spans 127 residues: Chorismate mutase AroH (127 aa).

Residues Ile-3–Leu-121 enclose the Chorismate mutase aroH-type domain. Residues Arg-7, Thr-74 to Glu-78, Arg-90, and Tyr-108 each bind prephenate.

In terms of assembly, homotrimer.

The protein localises to the cytoplasm. The catalysed reaction is chorismate = prephenate. It functions in the pathway metabolic intermediate biosynthesis; prephenate biosynthesis; prephenate from chorismate: step 1/1. Its function is as follows. Catalyzes the Claisen rearrangement of chorismate to prephenate. Probably involved in the aromatic amino acid biosynthesis. In Bacillus subtilis (strain 168), this protein is Chorismate mutase AroH.